The chain runs to 487 residues: Wax ester synthase/diacylglycerol acyltransferase 3 (487 aa).

Residues 1 to 193 (MYTMKKGKDM…KHASSNKKSW (193 aa)) lie on the Cytoplasmic side of the membrane. The Proton acceptor role is filled by His151. A helical membrane pass occupies residues 194 to 214 (WLVGRFWFMIRIIFTTVVELF). Residues 215 to 487 (KYLLTLCFMR…MEKGVHKMEV (273 aa)) are Lumenal-facing.

It in the N-terminal section; belongs to the long-chain O-acyltransferase family. As to expression, mostly expressed in flowers and siliques.

Its subcellular location is the cell membrane. The protein resides in the endoplasmic reticulum membrane. It catalyses the reaction an acyl-CoA + a 1,2-diacyl-sn-glycerol = a triacyl-sn-glycerol + CoA. It carries out the reaction a long chain fatty alcohol + a fatty acyl-CoA = a wax ester + CoA. The protein operates within glycerolipid metabolism; triacylglycerol biosynthesis. It functions in the pathway lipid metabolism. Its function is as follows. Bifunctional wax ester synthase/diacylglycerol acyltransferase. Involved in cuticular wax biosynthesis. The sequence is that of Wax ester synthase/diacylglycerol acyltransferase 3 from Arabidopsis thaliana (Mouse-ear cress).